A 440-amino-acid chain; its full sequence is Xylose isomerase (440 aa).

Residues His-99 and Asp-102 contribute to the active site. Residues Glu-230, Glu-266, His-269, Asp-294, Asp-305, Asp-307, and Asp-337 each contribute to the Mg(2+) site.

This sequence belongs to the xylose isomerase family. Homotetramer. The cofactor is Mg(2+).

Its subcellular location is the cytoplasm. The catalysed reaction is alpha-D-xylose = alpha-D-xylulofuranose. The protein is Xylose isomerase of Halalkalibacterium halodurans (strain ATCC BAA-125 / DSM 18197 / FERM 7344 / JCM 9153 / C-125) (Bacillus halodurans).